The following is a 154-amino-acid chain: Ribosome maturation factor RimP (154 aa).

The protein belongs to the RimP family.

It localises to the cytoplasm. Its function is as follows. Required for maturation of 30S ribosomal subunits. In Desulforudis audaxviator (strain MP104C), this protein is Ribosome maturation factor RimP.